We begin with the raw amino-acid sequence, 285 residues long: MGNLFCCVLVKQSDVAVKERFGKFQKVLNPGLQFVPWVIGDYVAGTLTLRLQQLDVQCETKTKDNVFVTVVASIQYRVLADKASDAFYRLSNPTTQIKAYVFDVIRACVPKLNLDDVFEQKNEIAKSVEEELDKAMTAYGYEILQTLIIDIEPDQQVKRAMNEINAAARMRVAASEKAEAEKIIQIKRAEGEAESKYLSGLGIARQRQAIVDGLRDSVLGFAGNVPGTSAKDVLDMVMMTQYFDTMRDIGATSKSSAVFIPHGPGAVSDVAAQIRNGLLQANNAS.

G2 is lipidated: N-myristoyl glycine. Coiled-coil stretches lie at residues 113-139 (NLDD…MTAY) and 165-185 (NAAA…KIIQ).

In terms of assembly, self-interacts and forms heteromers. Interacts with NB-LRR class of R proteins before R proteins (e.g. RPS2 or RPM1) are activated by the effectors.

The protein localises to the cell membrane. The chain is Hypersensitive-induced response protein 3 (HIR3) from Arabidopsis thaliana (Mouse-ear cress).